Here is a 218-residue protein sequence, read N- to C-terminus: Small ribosomal subunit protein uS3c (218 aa).

Positions 43–118 (IKNYVQKNMK…KLNISITRIE (76 aa)) constitute a KH type-2 domain.

It belongs to the universal ribosomal protein uS3 family. In terms of assembly, part of the 30S ribosomal subunit.

The protein resides in the plastid. Its subcellular location is the chloroplast. This is Small ribosomal subunit protein uS3c (rps3) from Populus trichocarpa (Western balsam poplar).